Here is an 837-residue protein sequence, read N- to C-terminus: Tuftelin-interacting protein 11 (837 aa).

Composition is skewed to basic and acidic residues over residues 1 to 13 (MSLS…GEGR) and 53 to 64 (VWAERDSDDERP). 3 disordered regions span residues 1 to 21 (MSLS…DDER), 53 to 72 (VWAE…KRAR), and 85 to 133 (LKKG…KGFA). Phosphoserine is present on residues Ser2, Ser59, and Ser98. The segment covering 91–102 (EEAELEDSDDEE) has biased composition (acidic residues). The segment covering 103–116 (RPVKQDDFPKDFGP) has biased composition (basic and acidic residues). A Phosphoserine modification is found at Ser144. A G-patch domain is found at 149–195 (TKGIGQKLLQKMGYVPGRGLGKNAQGIINPIEAKQRKGKGAVGAYGS). The interval 179-236 (IEAKQRKGKGAVGAYGSERTTQSMQDFPVVDSEEEAEEEFQKGLSQWRKDPSGSKKKP) is disordered. A Phosphoserine modification is found at Ser210. The short motif at 700 to 705 (VKDKFN) is the Nuclear localization signal element. Positions 710-734 (IMNRAVSSNVGAYMQPGARENIAYL) are required for nuclear speckle localization.

Belongs to the TFP11/STIP family. As to quaternary structure, identified in the spliceosome C complex. Found in the Intron Large (IL) complex, a post-mRNA release spliceosomal complex containing the excised intron, U2, U5 and U6 snRNPs, and splicing factors. Interacts with TUFT1. Interacts with DHX15; indicative for a recruitment of DHX15 to the IL complex. Interacts with GCFC2.

It localises to the cytoplasm. The protein localises to the nucleus. Involved in pre-mRNA splicing, specifically in spliceosome disassembly during late-stage splicing events. Intron turnover seems to proceed through reactions in two lariat-intron associated complexes termed Intron Large (IL) and Intron Small (IS). In cooperation with DHX15 seems to mediate the transition of the U2, U5 and U6 snRNP-containing IL complex to the snRNP-free IS complex leading to efficient debranching and turnover of excised introns. May play a role in the differentiation of ameloblasts and odontoblasts or in the forming of the enamel extracellular matrix. In Macaca fascicularis (Crab-eating macaque), this protein is Tuftelin-interacting protein 11 (TFIP11).